The following is a 268-amino-acid chain: UPF0328 protein ECU05_1640/ECU11_0090 (268 aa).

Belongs to the UPF0328 family.

This is UPF0328 protein ECU05_1640/ECU11_0090 from Encephalitozoon cuniculi (strain GB-M1) (Microsporidian parasite).